Reading from the N-terminus, the 167-residue chain is Peptide deformylase (167 aa).

Cysteine 91 and histidine 133 together coordinate Fe cation. Glutamate 134 is an active-site residue. Histidine 137 serves as a coordination point for Fe cation.

This sequence belongs to the polypeptide deformylase family. It depends on Fe(2+) as a cofactor.

The catalysed reaction is N-terminal N-formyl-L-methionyl-[peptide] + H2O = N-terminal L-methionyl-[peptide] + formate. In terms of biological role, removes the formyl group from the N-terminal Met of newly synthesized proteins. Requires at least a dipeptide for an efficient rate of reaction. N-terminal L-methionine is a prerequisite for activity but the enzyme has broad specificity at other positions. This is Peptide deformylase from Tolumonas auensis (strain DSM 9187 / NBRC 110442 / TA 4).